A 143-amino-acid polypeptide reads, in one-letter code: D-aminoacyl-tRNA deacylase (143 aa).

The Gly-cisPro motif, important for rejection of L-amino acids signature appears at 135 to 136; that stretch reads GP.

This sequence belongs to the DTD family. In terms of assembly, homodimer.

The protein resides in the cytoplasm. The enzyme catalyses glycyl-tRNA(Ala) + H2O = tRNA(Ala) + glycine + H(+). It catalyses the reaction a D-aminoacyl-tRNA + H2O = a tRNA + a D-alpha-amino acid + H(+). Its function is as follows. An aminoacyl-tRNA editing enzyme that deacylates mischarged D-aminoacyl-tRNAs. Also deacylates mischarged glycyl-tRNA(Ala), protecting cells against glycine mischarging by AlaRS. Acts via tRNA-based rather than protein-based catalysis; rejects L-amino acids rather than detecting D-amino acids in the active site. By recycling D-aminoacyl-tRNA to D-amino acids and free tRNA molecules, this enzyme counteracts the toxicity associated with the formation of D-aminoacyl-tRNA entities in vivo and helps enforce protein L-homochirality. This is D-aminoacyl-tRNA deacylase from Mycobacterium marinum (strain ATCC BAA-535 / M).